The chain runs to 1607 residues: MSDDEELQLAIEISKKTFKDEQKLRSNDLDLIRFESPDEPARQRKINQIKQLYEANSPGPSSYSGSLATSPIDFRPVYNEPRAGPIPHSQSYPRNYFQDWSAIASTSQPPAFPPPPRPPKPEQYKFPPAPSVPLLHDRYFVPPPPPVPPRHSRVQQSPPVPIHPTPPVSSTPLRHSAPSFASDSQQFLSPIKPFEISFNSTVDTSSNQTGSHDHSIQYQPLTHLYVPYVMHSLNSSYGALLNGDLIDLSAFEDSSNASQDEIRKEFDPLFISTYSTDTPSPDNSMPAVNAYFSKPIDEPECVGGAKLIQENIEFPSSSFCLIDCPNGIEEQVKKLCKRNLIRKDMTPDFFIAPTVDYMVTTASTVKVVVYKDHSWKANKSNGKAMICAIDEKMDIITTQALSLFDSELPTDKEYGLKIYGLNQFLSSDSLLGSNLYTGHCLLNGDDVKLDLGVFAPNSRIYEQTLESWNLMKSQVKYSTVVDKEDVENTLGHLASEMSQYEIAFNDGSTLKLSSSSQRVKQVIMLLCKCLHGIVPEKLYNEMQKYLASTTEDQLVHHRNDFLREIHSFLELYCRCTVSRYNIPPLQIITKPKVEVLSKMDFLQIMLNSVHSIPEHWQSQYSEFYMSLDLYHGTQVLDGFSNKVPKTIKNDHFFPRIPLDLYAKFKRLNLCQYPRETRIVVSISGTVRNSAQAANEYNPDIVMLGYCSVPLYDENLFMRQGPLFLPLTLLKKQPMLKPFGPYPYIKDARDPILIMSFKIWDTEIYFPNVVIDMQCIPQDFATLDIETQEYLLELIENQDTSTLETDDQDLIWQKRLHLTNQPEALPLVLSSLQDWSFGFVMRVYQILEEWAPLRPEIAMEFLLPKYPDERIRAHAVQSLARGSTDFLYHTIPQFIEALRFELYEKSALADFILELSFVSLDFTFEIYWQLQQRVDHCAVDDLPYAIRCQNLQQKMIDEHENPNLKTDIKLQHELLNELDSIQDDLRSKSGDSEIERLHRLRTRLGILDSKLLQNKVRLPICPAFDCTGVRIEECSVFNSNAKPLKIVFRGLNMNYSIIHKRDDDMRQDAFVMKMLNEMDRIWKSNGLDLRMITFRIMPVGYRRGMGELVLNCATLMEIQKEEGLRGVLNDEILRKWLMKHNSDEFAYKEAQENFIRSCAGWCIVTYVLGIGDRHNDNILFTKNGHVFHIDFGKYMGDWQMAAGFRRDRVPFVFTTEMFHVINNGRAPTQYNQKFIDYCCKAFNHLRRNKNTLTNLLRIMACSDIPGINMDSLAFVENNLMLDLSDTDATVQFTAMIQNSLGSAFVRLNFVAHTVAQFISSRPSFSKQDPNKLSFVPELYTENSDGRISRVTVLKFEKHCIPNKIYMYKVEVHRKNVAVSSFIYRSFAEFEELHTKLRARFPMMAVSLNTISNLRSNVRAVAQKRIIHVQKFLIYLFNQVDEICHCDLVYTFFHSILRDNKCDTYIDESLDMPSQCQIYLKIEYNSVKETLSVFIGHAKYLALLQNNQQPDPYVKTYVRPDLRNQSKQKTQVVRGTRHPTFNQDLNYTEFPIEILSTRVLEVSIWNNGGYLVKHKMYMLCIPLLKVKKLAESRKNCRTLEGWFNCEKCV.

Residues 2 to 21 (SDDEELQLAIEISKKTFKDE) enclose the UIM domain. 3 disordered regions span residues 54-91 (EANSPGPSSYSGSLATSPIDFRPVYNEPRAGPIPHSQS), 105-128 (STSQPPAFPPPPRPPKPEQYKFPP), and 142-182 (PPPP…SFAS). Residues 58-69 (PGPSSYSGSLAT) show a composition bias toward polar residues. A compositionally biased stretch (pro residues) spans 158-169 (PPVPIHPTPPVS). Residues 362 to 453 (ASTVKVVVYK…GDDVKLDLGV (92 aa)) form the PI3K-RBD domain. A C2 PI3K-type domain is found at 598–766 (KMDFLQIMLN…KIWDTEIYFP (169 aa)). A PIK helical domain is found at 776 to 953 (PQDFATLDIE…AIRCQNLQQK (178 aa)). In terms of domain architecture, PI3K/PI4K catalytic spans 1029 to 1303 (RIEECSVFNS…MIQNSLGSAF (275 aa)). The segment at 1035–1041 (VFNSNAK) is G-loop. Residues 1168–1176 (GIGDRHNDN) are catalytic loop. The tract at residues 1187–1213 (HIDFGKYMGDWQMAAGFRRDRVPFVFT) is activation loop. Positions 1344 to 1458 (GRISRVTVLK…TFFHSILRDN (115 aa)) constitute a PX domain. Residues 1472–1601 (SQCQIYLKIE…KNCRTLEGWF (130 aa)) enclose the C2 domain.

The protein belongs to the PI3/PI4-kinase family.

The protein localises to the cell projection. It is found in the phagocytic cup. Its subcellular location is the cytoplasmic vesicle. The protein resides in the phagosome membrane. It localises to the cytoplasm. The catalysed reaction is a 1,2-diacyl-sn-glycero-3-phospho-(1D-myo-inositol) + ATP = a 1,2-diacyl-sn-glycero-3-phospho-(1D-myo-inositol-3-phosphate) + ADP + H(+). Its function is as follows. Phosphatidylinositol 3-kinase involved in clearance of apoptotic cell corpses by phagosomes. Phagosome maturation requires two sequential and non-overlapping pulses of phosphatidylinositol-3-phosphate (PI3P) on the vesicle surface which mediates recruitment of sortins snx-1 and lst-4 and small GTPases rab-5, rab-2 and rab-7. The first pulse is initiated by piki-1, then maintained by vps-34 which also produces the second pulse. Unlike vps-34, not involved in the formation of PI3P in early endosomes. This is Phosphatidylinositol 3-kinase piki-1 from Caenorhabditis elegans.